A 559-amino-acid polypeptide reads, in one-letter code: Vacuolar protein 8 (559 aa).

Residue glycine 2 is the site of N-myristoyl glycine attachment. Cysteine 4 carries the S-palmitoyl cysteine lipid modification. ARM repeat units lie at residues 77–116, 118–157, 159–198, 200–239, 243–282, 284–323, 325–365, and 409–448; these read TERDVREVDRDTLEPILFLLQSPDIEVQRAASAALGNLAV, TENKVLIVQLGGLTPLIRQMMSPNVEVQCNAVGCITNLAT, EENKAKIARSGALGPLTRLAKSRDMRVQRNATGALLNMTH, DENRQQLVNAGAIPVLVQLLSSPDVDVQYYCTTALSNIAV, NRRKLAQSEPKLVQSLVNLMDSTSPKVQCQAALALRNLAS, EKYQLDIVRANGLHPLLRLLQSSYLPLILSAVACIRNISI, PMNE…NLAA, and DDLKSHLLNLGVCGVLIPLTHSPSIEVQGNSAAALGNLSS.

It belongs to the beta-catenin family.

Its subcellular location is the vacuole membrane. In terms of biological role, functions in both vacuole inheritance and protein targeting from the cytoplasm to vacuole. The chain is Vacuolar protein 8 (VAC8) from Gibberella zeae (strain ATCC MYA-4620 / CBS 123657 / FGSC 9075 / NRRL 31084 / PH-1) (Wheat head blight fungus).